Consider the following 990-residue polypeptide: TonB-dependent receptor P26 (990 aa).

The TonB box signature appears at 86–93 (DEVVVIGY). The TBDR plug domain occupies 97 to 213 (RKSDLTGSVS…ANGVVLVTTK (117 aa)). One can recognise a TBDR beta-barrel domain in the interval 220–990 (SSKPEVSANI…TITLGLNVTF (771 aa)). Residues 878–902 (TPENPTSDIPRAGGDSVTGTPPNSA) form a disordered region. The TonB C-terminal box motif lies at 974–990 (GSYPNPRTITLGLNVTF).

The protein belongs to the TonB-dependent receptor family.

The protein localises to the cell outer membrane. In terms of biological role, tonB-dependent receptor probably involved in ulvan degradation. Ulvan is the main polysaccharide component of the Ulvales (green seaweed) cell wall. It is composed of disaccharide building blocks comprising 3-sulfated rhamnose (Rha3S) linked to D-glucuronic acid (GlcA), L-iduronic acid (IduA), or D-xylose (Xyl). The TonB-dependent receptor may mediate transport of ulvan oligosaccharides from the surface of the outer membrane to the periplasm for subsequent degradation. This chain is TonB-dependent receptor P26, found in Formosa agariphila (strain DSM 15362 / KCTC 12365 / LMG 23005 / KMM 3901 / M-2Alg 35-1).